The sequence spans 585 residues: Packaging protein UL32 (585 aa).

A disordered region spans residues 1–25 (MDRVESEEPMDGFESPVFSENTSSN). Zn(2+) is bound by residues Cys-107, Cys-110, His-187, Cys-193, Cys-408, Cys-411, His-484, and Cys-491. Zinc finger regions lie at residues 107-193 (CLVC…LHVC) and 408-491 (CMLC…DLLC).

Belongs to the herpesviridae UL32 protein family.

The protein localises to the host cytoplasm. It localises to the host nucleus. Its function is as follows. Plays a role in efficient localization of neo-synthesized capsids to nuclear replication compartments, thereby controlling cleavage and packaging of virus genomic DNA. The protein is Packaging protein UL32 (26) of Varicella-zoster virus (strain Dumas) (HHV-3).